Here is a 356-residue protein sequence, read N- to C-terminus: S-adenosylmethionine:tRNA ribosyltransferase-isomerase (356 aa).

It belongs to the QueA family. As to quaternary structure, monomer.

It localises to the cytoplasm. The catalysed reaction is 7-aminomethyl-7-carbaguanosine(34) in tRNA + S-adenosyl-L-methionine = epoxyqueuosine(34) in tRNA + adenine + L-methionine + 2 H(+). It functions in the pathway tRNA modification; tRNA-queuosine biosynthesis. In terms of biological role, transfers and isomerizes the ribose moiety from AdoMet to the 7-aminomethyl group of 7-deazaguanine (preQ1-tRNA) to give epoxyqueuosine (oQ-tRNA). In Ralstonia nicotianae (strain ATCC BAA-1114 / GMI1000) (Ralstonia solanacearum), this protein is S-adenosylmethionine:tRNA ribosyltransferase-isomerase.